A 229-amino-acid polypeptide reads, in one-letter code: Flagellar L-ring protein (229 aa).

Positions 1 to 23 (MSPLTRIALALAASAALVLALTA) are cleaved as a signal peptide. Cys24 carries the N-palmitoyl cysteine lipid modification. The S-diacylglycerol cysteine moiety is linked to residue Cys24.

The protein belongs to the FlgH family. As to quaternary structure, the basal body constitutes a major portion of the flagellar organelle and consists of four rings (L,P,S, and M) mounted on a central rod.

It localises to the cell outer membrane. The protein resides in the bacterial flagellum basal body. Assembles around the rod to form the L-ring and probably protects the motor/basal body from shearing forces during rotation. The sequence is that of Flagellar L-ring protein from Anaeromyxobacter dehalogenans (strain 2CP-C).